The sequence spans 154 residues: uncharacterized protein (154 aa).

A disordered region spans residues 104-124 (NNNNNDNDNNNKEKEDNDEKE). Residues 112-124 (NNNKEKEDNDEKE) are compositionally biased toward basic and acidic residues.

This is an uncharacterized protein from Dictyostelium discoideum (Social amoeba).